Here is a 327-residue protein sequence, read N- to C-terminus: Tetraacyldisaccharide 4'-kinase (327 aa).

54-61 (TTGGTGKT) is a binding site for ATP. A disordered region spans residues 78-106 (PHILSRGHGGRERGPIGVNPNRSTPRDVG).

This sequence belongs to the LpxK family.

It carries out the reaction a lipid A disaccharide + ATP = a lipid IVA + ADP + H(+). It functions in the pathway glycolipid biosynthesis; lipid IV(A) biosynthesis; lipid IV(A) from (3R)-3-hydroxytetradecanoyl-[acyl-carrier-protein] and UDP-N-acetyl-alpha-D-glucosamine: step 6/6. Its function is as follows. Transfers the gamma-phosphate of ATP to the 4'-position of a tetraacyldisaccharide 1-phosphate intermediate (termed DS-1-P) to form tetraacyldisaccharide 1,4'-bis-phosphate (lipid IVA). The chain is Tetraacyldisaccharide 4'-kinase from Gluconobacter oxydans (strain 621H) (Gluconobacter suboxydans).